The chain runs to 60 residues: Sperm protamine P1 (60 aa).

The segment at 1–60 is disordered; it reads MARYRHSRSRSRSRYRRRRRRRSRYRSRRRRXRRRRRSRRGRRRRGYSRRRYSRRRRRRY.

This sequence belongs to the protamine P1 family. In terms of tissue distribution, testis.

It localises to the nucleus. It is found in the chromosome. Protamines substitute for histones in the chromatin of sperm during the haploid phase of spermatogenesis. They compact sperm DNA into a highly condensed, stable and inactive complex. The polypeptide is Sperm protamine P1 (PRM1) (Petrogale concinna (Nabarlek)).